Here is a 787-residue protein sequence, read N- to C-terminus: LPS-assembly protein LptD (787 aa).

The first 24 residues, 1-24 (MKKSFPTLLATLVWSALYSQHALA), serve as a signal peptide directing secretion.

It belongs to the LptD family. In terms of assembly, component of the lipopolysaccharide transport and assembly complex. Interacts with LptE and LptA.

Its subcellular location is the cell outer membrane. Functionally, together with LptE, is involved in the assembly of lipopolysaccharide (LPS) at the surface of the outer membrane. The sequence is that of LPS-assembly protein LptD from Pectobacterium atrosepticum (strain SCRI 1043 / ATCC BAA-672) (Erwinia carotovora subsp. atroseptica).